Here is a 972-residue protein sequence, read N- to C-terminus: UPF0746 protein DDB_G0280785 (972 aa).

Residues 1-19 (MISNKRKEIENINRHHEKD) are compositionally biased toward basic and acidic residues. The disordered stretch occupies residues 1–30 (MISNKRKEIENINRHHEKDNDDDDSDGIDN). The region spanning 44-78 (SGSTNYRELQIIAKSLGLASNGKKQLVYNRIEGYF) is the SAP domain.

The protein belongs to the UPF0746 family.

This chain is UPF0746 protein DDB_G0280785, found in Dictyostelium discoideum (Social amoeba).